Reading from the N-terminus, the 198-residue chain is NAD(P)H dehydrogenase (quinone) (198 aa).

The region spanning 4–189 (ILVLYYSMYG…SIARYQGEYV (186 aa)) is the Flavodoxin-like domain. FMN is bound by residues 10-15 (SMYGHI) and 78-80 (TRF). NAD(+) is bound at residue Y12. W98 is a substrate binding site. FMN is bound by residues 113-118 (STGTGG) and H133.

Belongs to the WrbA family. Requires FMN as cofactor.

The enzyme catalyses a quinone + NADH + H(+) = a quinol + NAD(+). It carries out the reaction a quinone + NADPH + H(+) = a quinol + NADP(+). The polypeptide is NAD(P)H dehydrogenase (quinone) (Salmonella paratyphi B (strain ATCC BAA-1250 / SPB7)).